Reading from the N-terminus, the 428-residue chain is Maltoporin (428 aa).

A signal peptide spans 1–24; sequence MKSMRILPISLTIMAGLLSIEASA.

Belongs to the porin LamB (TC 1.B.3) family. Homotrimer formed of three 18-stranded antiparallel beta-barrels, containing three independent channels.

Its subcellular location is the cell outer membrane. It carries out the reaction beta-maltose(in) = beta-maltose(out). In terms of biological role, involved in the transport of maltose and maltodextrins. This is Maltoporin from Photorhabdus laumondii subsp. laumondii (strain DSM 15139 / CIP 105565 / TT01) (Photorhabdus luminescens subsp. laumondii).